The following is a 261-amino-acid chain: CD40 ligand (261 aa).

Residues Met-1–Lys-22 are Cytoplasmic-facing. A helical; Signal-anchor for type II membrane protein transmembrane segment spans residues Ile-23–Leu-46. The Extracellular segment spans residues His-47–Leu-261. The THD domain occupies Ile-122–Leu-261. Cys-178 and Cys-218 form a disulfide bridge. N-linked (GlcNAc...) (complex) asparagine; alternate glycosylation is present at Asn-240. N-linked (GlcNAc...) (high mannose) asparagine; alternate glycosylation occurs at Asn-240.

This sequence belongs to the tumor necrosis factor family. Homotrimer. Interacts with isoform 3 of CD28. CD40 ligand, soluble form: Exists as either a monomer or a homotrimer. Forms a ternary complex between CD40 and integrins for CD40-CD40LG signaling. The soluble form derives from the membrane form by proteolytic processing. In terms of processing, N-linked glycan is a mixture of high mannose and complex type. Glycan structure does not influence binding affinity to CD40. Post-translationally, not O-glycosylated. As to expression, specifically expressed on activated CD4+ T-lymphocytes.

The protein localises to the cell membrane. The protein resides in the cell surface. It is found in the secreted. Cytokine that acts as a ligand to CD40/TNFRSF5. Costimulates T-cell proliferation and cytokine production. Its cross-linking on T-cells generates a costimulatory signal which enhances the production of IL4 and IL10 in conjunction with the TCR/CD3 ligation and CD28 costimulation. Induces the activation of NF-kappa-B. Induces the activation of kinases MAPK8 and PAK2 in T-cells. Induces tyrosine phosphorylation of isoform 3 of CD28. Mediates B-cell proliferation in the absence of co-stimulus as well as IgE production in the presence of IL4. Involved in immunoglobulin class switching. Functionally, acts as a ligand for integrins, specifically ITGA5:ITGB1 and ITGAV:ITGB3; both integrins and the CD40 receptor are required for activation of CD40-CD40LG signaling, which have cell-type dependent effects, such as B-cell activation, NF-kappa-B signaling and anti-apoptotic signaling. In Homo sapiens (Human), this protein is CD40 ligand (CD40LG).